The sequence spans 263 residues: UPF0246 protein Strop_2927 (263 aa).

The protein belongs to the UPF0246 family.

The chain is UPF0246 protein Strop_2927 from Salinispora tropica (strain ATCC BAA-916 / DSM 44818 / JCM 13857 / NBRC 105044 / CNB-440).